The sequence spans 696 residues: PWWP domain-containing DNA repair factor 3B (696 aa).

Composition is skewed to polar residues over residues 119–128 (QNVPQKQSDS) and 290–300 (CLDTSQNQPSM). 2 disordered regions span residues 119-143 (QNVP…DLPG) and 278-303 (NIED…MESE). S128 carries the phosphoserine modification. Residues 392 to 453 (TGMIVWFKYQ…KKFDCKEKQM (62 aa)) form the PWWP domain.

The protein belongs to the PWWP3A family.

This chain is PWWP domain-containing DNA repair factor 3B, found in Homo sapiens (Human).